A 123-amino-acid chain; its full sequence is Small ribosomal subunit protein uS12 (123 aa).

At Asp-89 the chain carries 3-methylthioaspartic acid.

Belongs to the universal ribosomal protein uS12 family. As to quaternary structure, part of the 30S ribosomal subunit. Contacts proteins S8 and S17. May interact with IF1 in the 30S initiation complex.

With S4 and S5 plays an important role in translational accuracy. Its function is as follows. Interacts with and stabilizes bases of the 16S rRNA that are involved in tRNA selection in the A site and with the mRNA backbone. Located at the interface of the 30S and 50S subunits, it traverses the body of the 30S subunit contacting proteins on the other side and probably holding the rRNA structure together. The combined cluster of proteins S8, S12 and S17 appears to hold together the shoulder and platform of the 30S subunit. The polypeptide is Small ribosomal subunit protein uS12 (Methylobacterium sp. (strain 4-46)).